Reading from the N-terminus, the 266-residue chain is Probable BRI1 kinase inhibitor 1 (266 aa).

Disordered regions lie at residues 1 to 144 and 167 to 242; these read MTMN…AKTR and FSRH…SEES. Over residues 9 to 30 the composition is skewed to pro residues; sequence RSQPPPPHPPLFKPTTPPPPPL. The segment covering 31-40 has biased composition (low complexity); the sequence is LSTSTSTSPP. Residues 77 to 93 show a composition bias toward polar residues; sequence LSHNNYSSKANQHRQTG. The segment covering 100–109 has biased composition (basic and acidic residues); sequence SKEKDREYKA. Low complexity-rich tracts occupy residues 210 to 221 and 229 to 241; these read LSSAPASLRASP and VGGS…SSEE.

In terms of biological role, negative regulator of brassinosteroid signaling. The chain is Probable BRI1 kinase inhibitor 1 (BKI1) from Oryza sativa subsp. indica (Rice).